A 100-amino-acid polypeptide reads, in one-letter code: Integration host factor subunit alpha (100 aa).

Belongs to the bacterial histone-like protein family. As to quaternary structure, heterodimer of an alpha and a beta chain.

Functionally, this protein is one of the two subunits of integration host factor, a specific DNA-binding protein that functions in genetic recombination as well as in transcriptional and translational control. The sequence is that of Integration host factor subunit alpha from Cereibacter sphaeroides (strain ATCC 17023 / DSM 158 / JCM 6121 / CCUG 31486 / LMG 2827 / NBRC 12203 / NCIMB 8253 / ATH 2.4.1.) (Rhodobacter sphaeroides).